Reading from the N-terminus, the 88-residue chain is DNA-directed RNA polymerase subunit omega (88 aa).

It belongs to the RNA polymerase subunit omega family. The RNAP catalytic core consists of 2 alpha, 1 beta, 1 beta' and 1 omega subunit. When a sigma factor is associated with the core the holoenzyme is formed, which can initiate transcription.

It carries out the reaction RNA(n) + a ribonucleoside 5'-triphosphate = RNA(n+1) + diphosphate. Promotes RNA polymerase assembly. Latches the N- and C-terminal regions of the beta' subunit thereby facilitating its interaction with the beta and alpha subunits. In Salinispora arenicola (strain CNS-205), this protein is DNA-directed RNA polymerase subunit omega.